The primary structure comprises 229 residues: Potassium/proton antiporter CemA (229 aa).

Helical transmembrane passes span 6–26 (AFIPFFDFTSIVFLPWLISLC), 107–127 (ILHFSTNLISFVILSGYSFWG), and 189–209 (ILSGLVSTFPVILDTIFKYWI).

It belongs to the CemA family.

Its subcellular location is the plastid. It is found in the chloroplast inner membrane. It catalyses the reaction K(+)(in) + H(+)(out) = K(+)(out) + H(+)(in). Contributes to K(+)/H(+) antiport activity by supporting proton efflux to control proton extrusion and homeostasis in chloroplasts in a light-dependent manner to modulate photosynthesis. Prevents excessive induction of non-photochemical quenching (NPQ) under continuous-light conditions. Indirectly promotes efficient inorganic carbon uptake into chloroplasts. The chain is Potassium/proton antiporter CemA from Lepidium virginicum (Virginia pepperweed).